The primary structure comprises 206 residues: Uracil phosphoribosyltransferase (206 aa).

5-phospho-alpha-D-ribose 1-diphosphate is bound by residues Arg76, Arg101, and 128–136 (DPMLATGGS). Residues Ile191 and 196–198 (GDA) each bind uracil. Asp197 is a binding site for 5-phospho-alpha-D-ribose 1-diphosphate.

This sequence belongs to the UPRTase family. Mg(2+) serves as cofactor.

The enzyme catalyses UMP + diphosphate = 5-phospho-alpha-D-ribose 1-diphosphate + uracil. The protein operates within pyrimidine metabolism; UMP biosynthesis via salvage pathway; UMP from uracil: step 1/1. Its activity is regulated as follows. Allosterically activated by GTP. Functionally, catalyzes the conversion of uracil and 5-phospho-alpha-D-ribose 1-diphosphate (PRPP) to UMP and diphosphate. This Malacoplasma penetrans (strain HF-2) (Mycoplasma penetrans) protein is Uracil phosphoribosyltransferase.